We begin with the raw amino-acid sequence, 263 residues long: 3-methyl-2-oxobutanoate hydroxymethyltransferase (263 aa).

Residues Asp-45 and Asp-84 each contribute to the Mg(2+) site. 3-methyl-2-oxobutanoate is bound by residues 45 to 46, Asp-84, and Lys-112; that span reads DS. Residue Glu-114 participates in Mg(2+) binding. The active-site Proton acceptor is Glu-181.

It belongs to the PanB family. In terms of assembly, homodecamer; pentamer of dimers. Mg(2+) is required as a cofactor.

The protein localises to the cytoplasm. It catalyses the reaction 3-methyl-2-oxobutanoate + (6R)-5,10-methylene-5,6,7,8-tetrahydrofolate + H2O = 2-dehydropantoate + (6S)-5,6,7,8-tetrahydrofolate. It participates in cofactor biosynthesis; (R)-pantothenate biosynthesis; (R)-pantoate from 3-methyl-2-oxobutanoate: step 1/2. In terms of biological role, catalyzes the reversible reaction in which hydroxymethyl group from 5,10-methylenetetrahydrofolate is transferred onto alpha-ketoisovalerate to form ketopantoate. The chain is 3-methyl-2-oxobutanoate hydroxymethyltransferase from Buchnera aphidicola subsp. Acyrthosiphon pisum (strain 5A).